A 185-amino-acid polypeptide reads, in one-letter code: Probable nicotinate-nucleotide adenylyltransferase (185 aa).

The protein belongs to the NadD family.

The enzyme catalyses nicotinate beta-D-ribonucleotide + ATP + H(+) = deamido-NAD(+) + diphosphate. The protein operates within cofactor biosynthesis; NAD(+) biosynthesis; deamido-NAD(+) from nicotinate D-ribonucleotide: step 1/1. Catalyzes the reversible adenylation of nicotinate mononucleotide (NaMN) to nicotinic acid adenine dinucleotide (NaAD). The chain is Probable nicotinate-nucleotide adenylyltransferase from Methylorubrum extorquens (strain CM4 / NCIMB 13688) (Methylobacterium extorquens).